The following is a 285-amino-acid chain: Tropomyosin-2 (285 aa).

The stretch at 1–277 (MDAIKKKMQA…KDIGDDLDTA (277 aa)) forms a coiled coil. The segment at 103–133 (EERLATATAKLSEASQAADESERARKVLENR) is disordered. The span at 122–133 (ESERARKVLENR) shows a compositional bias: basic and acidic residues.

Belongs to the tropomyosin family. In terms of assembly, homodimer.

Tropomyosin, in association with the troponin complex, plays a central role in the calcium dependent regulation of muscle contraction. The chain is Tropomyosin-2 from Bombyx mori (Silk moth).